We begin with the raw amino-acid sequence, 254 residues long: Type III pantothenate kinase (254 aa).

Residue 22 to 29 (VLGNTHVR) coordinates ATP. Residues Tyr-89 and 93 to 96 (GLDR) contribute to the substrate site. Asp-95 serves as the catalytic Proton acceptor. Asp-115 is a K(+) binding site. Thr-118 provides a ligand contact to ATP. Substrate is bound at residue Thr-173.

The protein belongs to the type III pantothenate kinase family. Homodimer. NH4(+) is required as a cofactor. K(+) serves as cofactor.

It localises to the cytoplasm. It carries out the reaction (R)-pantothenate + ATP = (R)-4'-phosphopantothenate + ADP + H(+). Its pathway is cofactor biosynthesis; coenzyme A biosynthesis; CoA from (R)-pantothenate: step 1/5. Functionally, catalyzes the phosphorylation of pantothenate (Pan), the first step in CoA biosynthesis. This is Type III pantothenate kinase from Synechococcus sp. (strain JA-2-3B'a(2-13)) (Cyanobacteria bacterium Yellowstone B-Prime).